The primary structure comprises 363 residues: Flagellar P-ring protein 2 (363 aa).

The first 20 residues, 1-20 (MKLRTCCISLMLLLALPLQA), serve as a signal peptide directing secretion.

It belongs to the FlgI family. The basal body constitutes a major portion of the flagellar organelle and consists of four rings (L,P,S, and M) mounted on a central rod.

The protein resides in the periplasm. The protein localises to the bacterial flagellum basal body. Functionally, assembles around the rod to form the L-ring and probably protects the motor/basal body from shearing forces during rotation. The chain is Flagellar P-ring protein 2 from Photobacterium profundum (strain SS9).